The primary structure comprises 444 residues: Phosphoglucosamine mutase (444 aa).

Ser-102 functions as the Phosphoserine intermediate in the catalytic mechanism. Residues Ser-102, Asp-241, Asp-243, and Asp-245 each contribute to the Mg(2+) site. Residue Ser-102 is modified to Phosphoserine.

Belongs to the phosphohexose mutase family. The cofactor is Mg(2+). Activated by phosphorylation.

The catalysed reaction is alpha-D-glucosamine 1-phosphate = D-glucosamine 6-phosphate. Its function is as follows. Catalyzes the conversion of glucosamine-6-phosphate to glucosamine-1-phosphate. The chain is Phosphoglucosamine mutase from Leptothrix cholodnii (strain ATCC 51168 / LMG 8142 / SP-6) (Leptothrix discophora (strain SP-6)).